The primary structure comprises 490 residues: Betaine aldehyde dehydrogenase (490 aa).

A K(+)-binding site is contributed by aspartate 93. Residue 150-152 (GAW) coordinates NAD(+). Lysine 162 functions as the Charge relay system in the catalytic mechanism. 176–179 (KPSE) contributes to the NAD(+) binding site. A K(+)-binding site is contributed by valine 180. 230–233 (GVKT) provides a ligand contact to NAD(+). Leucine 246 contacts K(+). Glutamate 252 serves as the catalytic Proton acceptor. Glycine 254, cysteine 286, and glutamate 387 together coordinate NAD(+). The active-site Nucleophile is cysteine 286. Cysteine 286 bears the Cysteine sulfenic acid (-SOH) mark. K(+) is bound by residues lysine 457 and glycine 460. Catalysis depends on glutamate 464, which acts as the Charge relay system.

Belongs to the aldehyde dehydrogenase family. As to quaternary structure, dimer of dimers. K(+) serves as cofactor.

It carries out the reaction betaine aldehyde + NAD(+) + H2O = glycine betaine + NADH + 2 H(+). It functions in the pathway amine and polyamine biosynthesis; betaine biosynthesis via choline pathway; betaine from betaine aldehyde: step 1/1. Its function is as follows. Involved in the biosynthesis of the osmoprotectant glycine betaine. Catalyzes the irreversible oxidation of betaine aldehyde to the corresponding acid. The sequence is that of Betaine aldehyde dehydrogenase from Serratia proteamaculans (strain 568).